A 125-amino-acid polypeptide reads, in one-letter code: Small ribosomal subunit protein uS13 (125 aa).

The disordered stretch occupies residues 94 to 125 (SLPVRGQRTRTNARTRKGKRKTVAGKKKAVKK).

It belongs to the universal ribosomal protein uS13 family. As to quaternary structure, part of the 30S ribosomal subunit. Forms a loose heterodimer with protein S19. Forms two bridges to the 50S subunit in the 70S ribosome.

Its function is as follows. Located at the top of the head of the 30S subunit, it contacts several helices of the 16S rRNA. In the 70S ribosome it contacts the 23S rRNA (bridge B1a) and protein L5 of the 50S subunit (bridge B1b), connecting the 2 subunits; these bridges are implicated in subunit movement. Contacts the tRNAs in the A and P-sites. This Chlorobium chlorochromatii (strain CaD3) protein is Small ribosomal subunit protein uS13.